A 339-amino-acid polypeptide reads, in one-letter code: N-acetylmuramate/N-acetylglucosamine kinase (339 aa).

This sequence belongs to the kinase AmgK family.

It catalyses the reaction N-acetyl-D-muramate + ATP = N-acetyl-alpha-D-muramate 1-phosphate + ADP + H(+). The enzyme catalyses N-acetyl-D-glucosamine + ATP = N-acetyl-alpha-D-glucosamine 1-phosphate + ADP + H(+). It functions in the pathway cell wall biogenesis; peptidoglycan recycling. Its function is as follows. Sugar kinase that catalyzes the ATP-dependent phosphorylation of N-acetylmuramate (MurNAc) and N-acetylglucosamine (GlcNAc) at its C1 hydroxyl group, leading to MurNAc alpha-1P and GlcNAc alpha-1P, respectively. Is involved in peptidoglycan recycling as part of a cell wall recycling pathway that bypasses de novo biosynthesis of the peptidoglycan precursor UDP-MurNAc. Plays a role in intrinsic resistance to fosfomycin, which targets the de novo synthesis of UDP-MurNAc. Is also able to use N-acetylgalactosamine (GalNAc) as a substrate, but not N-acetylmannosamine, N-deacetylated sugars or glucose. In Pseudomonas putida (strain ATCC 47054 / DSM 6125 / CFBP 8728 / NCIMB 11950 / KT2440), this protein is N-acetylmuramate/N-acetylglucosamine kinase.